Reading from the N-terminus, the 166-residue chain is Large ribosomal subunit protein eL14 (166 aa).

The interval 135-166 (KADGTPRVLKKDRRERLRAEKAKGGKKAAAKK) is disordered. Residues 146–157 (DRRERLRAEKAK) are compositionally biased toward basic and acidic residues.

This sequence belongs to the eukaryotic ribosomal protein eL14 family.

The polypeptide is Large ribosomal subunit protein eL14 (RpL14) (Drosophila melanogaster (Fruit fly)).